The sequence spans 311 residues: Forkhead box protein I2 (311 aa).

The segment at residues 99-193 (RPPYSYSALI…DNGNFRRKRR (95 aa)) is a DNA-binding region (fork-head). Disordered regions lie at residues 188–237 (FRRK…TTTC) and 263–294 (FSLR…QTGA). Positions 219–231 (STPQDPQTSPSPS) are enriched in low complexity.

It is found in the nucleus. Possible transcriptional activator. This is Forkhead box protein I2 from Mus musculus (Mouse).